The following is a 202-amino-acid chain: 3-isopropylmalate dehydratase small subunit (202 aa).

This sequence belongs to the LeuD family. LeuD type 1 subfamily. Heterodimer of LeuC and LeuD.

The catalysed reaction is (2R,3S)-3-isopropylmalate = (2S)-2-isopropylmalate. The protein operates within amino-acid biosynthesis; L-leucine biosynthesis; L-leucine from 3-methyl-2-oxobutanoate: step 2/4. Catalyzes the isomerization between 2-isopropylmalate and 3-isopropylmalate, via the formation of 2-isopropylmaleate. The sequence is that of 3-isopropylmalate dehydratase small subunit from Paenarthrobacter aurescens (strain TC1).